The following is a 485-amino-acid chain: Glutamyl-tRNA(Gln) amidotransferase subunit A (485 aa).

Residues K78 and S153 each act as charge relay system in the active site. S177 functions as the Acyl-ester intermediate in the catalytic mechanism.

The protein belongs to the amidase family. GatA subfamily. In terms of assembly, heterotrimer of A, B and C subunits.

It carries out the reaction L-glutamyl-tRNA(Gln) + L-glutamine + ATP + H2O = L-glutaminyl-tRNA(Gln) + L-glutamate + ADP + phosphate + H(+). Functionally, allows the formation of correctly charged Gln-tRNA(Gln) through the transamidation of misacylated Glu-tRNA(Gln) in organisms which lack glutaminyl-tRNA synthetase. The reaction takes place in the presence of glutamine and ATP through an activated gamma-phospho-Glu-tRNA(Gln). The sequence is that of Glutamyl-tRNA(Gln) amidotransferase subunit A from Syntrophus aciditrophicus (strain SB).